A 288-amino-acid chain; its full sequence is POU domain class 2-associating factor 2 (288 aa).

The OCA domain maps to 10–32; the sequence is KRVYQGVRVKHTVKDLLAEKRSG. Disordered regions lie at residues 24-52 and 247-274; these read DLLA…PFVQ and PPKV…VKED. A compositionally biased stretch (low complexity) spans 35–48; it reads SNSRLNGSVSSSQS.

The protein belongs to the POU2AF family. In terms of assembly, interacts with POU2F3 (via the POU domain) in a DNA-dependent manner; this interaction recruits POU2AF2 to chromatin and increases POU2F3 transactivation activity. As to expression, expressed in tuft cells of colon mucosa, as well as in small intestine and thymus.

It localises to the cytoplasm. Its subcellular location is the cytosol. The protein resides in the nucleus. Functionally, transcriptional coactivator of POU2F3. This complex drives the development of tuft cells, a rare chemosensory cells that coordinate immune and neural functions within mucosal epithelial tissues. This Homo sapiens (Human) protein is POU domain class 2-associating factor 2.